A 336-amino-acid chain; its full sequence is Ketol-acid reductoisomerase (NADP(+)) 1 (336 aa).

The KARI N-terminal Rossmann domain occupies 2-181 (AKVYYEKDVT…GATRAGVLET (180 aa)). NADP(+) contacts are provided by residues 25 to 28 (YGSQ), arginine 48, serine 52, and 82 to 85 (DELQ). The active site involves histidine 107. Glycine 133 provides a ligand contact to NADP(+). Residues 182–327 (TFKEETETDL…RKLRGMMPFV (146 aa)) enclose the KARI C-terminal knotted domain. Aspartate 190, glutamate 194, glutamate 226, and glutamate 230 together coordinate Mg(2+). Serine 251 serves as a coordination point for substrate.

Belongs to the ketol-acid reductoisomerase family. It depends on Mg(2+) as a cofactor.

The catalysed reaction is (2R)-2,3-dihydroxy-3-methylbutanoate + NADP(+) = (2S)-2-acetolactate + NADPH + H(+). It catalyses the reaction (2R,3R)-2,3-dihydroxy-3-methylpentanoate + NADP(+) = (S)-2-ethyl-2-hydroxy-3-oxobutanoate + NADPH + H(+). Its pathway is amino-acid biosynthesis; L-isoleucine biosynthesis; L-isoleucine from 2-oxobutanoate: step 2/4. It participates in amino-acid biosynthesis; L-valine biosynthesis; L-valine from pyruvate: step 2/4. Functionally, involved in the biosynthesis of branched-chain amino acids (BCAA). Catalyzes an alkyl-migration followed by a ketol-acid reduction of (S)-2-acetolactate (S2AL) to yield (R)-2,3-dihydroxy-isovalerate. In the isomerase reaction, S2AL is rearranged via a Mg-dependent methyl migration to produce 3-hydroxy-3-methyl-2-ketobutyrate (HMKB). In the reductase reaction, this 2-ketoacid undergoes a metal-dependent reduction by NADPH to yield (R)-2,3-dihydroxy-isovalerate. The chain is Ketol-acid reductoisomerase (NADP(+)) 1 from Bacillus anthracis.